A 556-amino-acid chain; its full sequence is Serine/threonine-protein kinase PksC (556 aa).

A Protein kinase domain is found at 20-287 (YQLRDLLGEG…SAEAMRDECL (268 aa)). ATP is bound by residues 26–34 (LGEGGMASV) and K49. D151 (proton acceptor) is an active-site residue. 2 disordered regions span residues 300 to 403 (IVPG…PGGK) and 435 to 485 (EDPE…DPDK). Residues 336–348 (QPTPSPGPNPYGT) are compositionally biased toward pro residues. Composition is skewed to low complexity over residues 360–381 (YPQQ…QAAA) and 445–458 (STAS…KAAG). Positions 461-475 (GPDKEKTIEKDKCTE) are enriched in basic and acidic residues. The PASTA domain occupies 482–550 (DPDKIQVPDF…MPEIQLKVST (69 aa)).

It belongs to the protein kinase superfamily. Ser/Thr protein kinase family.

It catalyses the reaction L-seryl-[protein] + ATP = O-phospho-L-seryl-[protein] + ADP + H(+). The enzyme catalyses L-threonyl-[protein] + ATP = O-phospho-L-threonyl-[protein] + ADP + H(+). The chain is Serine/threonine-protein kinase PksC (pksC) from Streptomyces coelicolor (strain ATCC BAA-471 / A3(2) / M145).